The following is a 483-amino-acid chain: MTTPHGLLQYSSGAFSDQVPADDSAEEHGVKDHAMLAPFTAAWQTAISPPLVIERSEGCYVYDVNGTKYLDALAGLLSTALGGSEPRLVKAATEQLNKLPFYHSFWNHTTRPSLDLAKELISMFTAREMGKVFFTNSGSEANDSQVKIVWYYNNALGRPKKKNIISRTQSYHGTTFISASLSGLPTLHQDFDLPGRFVLHTDCPHYWRFHLPGETEEEFATRLADNLENLILKQGPETIAAFIAEPVIGAGGVILPPKTYFEKIQAVVKKYDILFIVDEVITGFGRLGTMFGSDLYNIKPDLVSLAKALSSAYAPIGAILVSPEISDVIHSHSNKLGTFAHGFTYSGHPVSCAVALEALKIYRERDIPGHVTHVAQRFQEGIKAFAAGSPIVGETRGVGLLIATEFTDNKSPYELFPFEWGVGEIFGQECKKRGMMVKVLGNLIAMSPPLIITREEIDKLVSIYGEALKATEERVAELKSKKN.

Pyridoxal 5'-phosphate is bound at residue 138–139; the sequence is GS. Substrate is bound at residue Tyr-171. A pyridoxal 5'-phosphate-binding site is contributed by Asp-278. Residue Lys-307 coordinates substrate. N6-(pyridoxal phosphate)lysine is present on Lys-307.

Belongs to the class-III pyridoxal-phosphate-dependent aminotransferase family. As to expression, not detected in roots, stems, flowers or leaves of healthy plants.

It localises to the cytoplasm. The enzyme catalyses 4-aminobutanoate + pyruvate = succinate semialdehyde + L-alanine. The catalysed reaction is 4-aminobutanoate + glyoxylate = succinate semialdehyde + glycine. Functionally, transaminase that degrades gamma-amino butyric acid (GABA). The polypeptide is Probable gamma-aminobutyrate transaminase 4 (GABA-T) (Oryza sativa subsp. japonica (Rice)).